The sequence spans 428 residues: Glutamyl-tRNA reductase (428 aa).

Substrate-binding positions include 49-52, S107, 112-114, and Q118; these read TCNR and EPQ. C50 functions as the Nucleophile in the catalytic mechanism. 187–192 serves as a coordination point for NADP(+); the sequence is GAGETI.

Belongs to the glutamyl-tRNA reductase family. Homodimer.

The enzyme catalyses (S)-4-amino-5-oxopentanoate + tRNA(Glu) + NADP(+) = L-glutamyl-tRNA(Glu) + NADPH + H(+). Its pathway is porphyrin-containing compound metabolism; protoporphyrin-IX biosynthesis; 5-aminolevulinate from L-glutamyl-tRNA(Glu): step 1/2. In terms of biological role, catalyzes the NADPH-dependent reduction of glutamyl-tRNA(Glu) to glutamate 1-semialdehyde (GSA). The polypeptide is Glutamyl-tRNA reductase (Pseudomonas fluorescens (strain Pf0-1)).